We begin with the raw amino-acid sequence, 190 residues long: Probable nicotinate-nucleotide adenylyltransferase (190 aa).

The protein belongs to the NadD family.

It carries out the reaction nicotinate beta-D-ribonucleotide + ATP + H(+) = deamido-NAD(+) + diphosphate. Its pathway is cofactor biosynthesis; NAD(+) biosynthesis; deamido-NAD(+) from nicotinate D-ribonucleotide: step 1/1. In terms of biological role, catalyzes the reversible adenylation of nicotinate mononucleotide (NaMN) to nicotinic acid adenine dinucleotide (NaAD). The protein is Probable nicotinate-nucleotide adenylyltransferase of Frankia alni (strain DSM 45986 / CECT 9034 / ACN14a).